Here is a 62-residue protein sequence, read N- to C-terminus: Ubiquinol-cytochrome c reductase complex 6.7 kDa protein (62 aa).

Topologically, residues 2–25 (TSPAAAGNGLFKFLRPKLRPQSTD) are mitochondrial matrix. The chain crosses the membrane as a helical span at residues 26–44 (IQAAAGWGVAAVTGALWVI). At 45–62 (QPWDFLRKTFIEKQEEEK) the chain is on the mitochondrial intermembrane side.

This sequence belongs to the UQCR11/QCR10 family. As to quaternary structure, component of the ubiquinol-cytochrome c oxidoreductase (cytochrome b-c1 complex, complex III, CIII), a multisubunit enzyme composed of 3 respiratory subunits cytochrome b, cytochrome c1 and Rieske protein, 2 core protein subunits, and additional low-molecular weight protein subunits. The complex exists as an obligatory dimer and forms supercomplexes (SCs) in the inner mitochondrial membrane with cytochrome c oxidase (complex IV, CIV).

It is found in the mitochondrion inner membrane. Component of the ubiquinol-cytochrome c oxidoreductase, a multisubunit transmembrane complex that is part of the mitochondrial electron transport chain which drives oxidative phosphorylation. The respiratory chain contains 3 multisubunit complexes succinate dehydrogenase (complex II, CII), ubiquinol-cytochrome c oxidoreductase (cytochrome b-c1 complex, complex III, CIII) and cytochrome c oxidase (complex IV, CIV), that cooperate to transfer electrons derived from NADH and succinate to molecular oxygen, creating an electrochemical gradient over the inner membrane that drives transmembrane transport and the ATP synthase. The cytochrome b-c1 complex catalyzes electron transfer from ubiquinol to cytochrome c, linking this redox reaction to translocation of protons across the mitochondrial inner membrane, with protons being carried across the membrane as hydrogens on the quinol. In the process called Q cycle, 2 protons are consumed from the matrix, 4 protons are released into the intermembrane space and 2 electrons are passed to cytochrome c. QCR10 has a role in CIII assembly and RIP1 stability. The protein is Ubiquinol-cytochrome c reductase complex 6.7 kDa protein of Solanum tuberosum (Potato).